Here is a 767-residue protein sequence, read N- to C-terminus: Polyketide biosynthesis protein PksE (767 aa).

The tract at residues 1 to 312 (MITYVFPGQG…QRNVQAGITA (312 aa)) is acyl transferase. Residues Ser-87 and His-193 contribute to the active site.

The protein in the N-terminal section; belongs to the FabD family.

Its subcellular location is the cytoplasm. It catalyses the reaction holo-[ACP] + malonyl-CoA = malonyl-[ACP] + CoA. Its pathway is antibiotic biosynthesis; bacillaene biosynthesis. Functionally, probably involved in some intermediate steps for the synthesis of the antibiotic polyketide bacillaene which is involved in secondary metabolism. Probably has an acyl transferase activity and could also have a flavin mononucleotide-dependent oxidoreductase activity. The polypeptide is Polyketide biosynthesis protein PksE (pksE) (Bacillus subtilis (strain 168)).